The following is a 288-amino-acid chain: Protease HtpX (288 aa).

The next 2 helical transmembrane spans lie at 5–25 and 35–55; these read IALF…VMSL and GLLV…LLLS. His140 lines the Zn(2+) pocket. The active site involves Glu141. His144 contacts Zn(2+). Transmembrane regions (helical) follow at residues 155–175 and 194–214; these read LLQG…GGII and IIVF…SMWF. Glu219 contributes to the Zn(2+) binding site.

It belongs to the peptidase M48B family. It depends on Zn(2+) as a cofactor.

It is found in the cell inner membrane. The polypeptide is Protease HtpX (Stenotrophomonas maltophilia (strain K279a)).